The following is a 313-amino-acid chain: Nucleotide-binding protein Swit_0399 (313 aa).

20-27 contributes to the ATP binding site; sequence GMSGSGKK. 73-76 lines the GTP pocket; the sequence is DSRT. The interval 289–313 is disordered; the sequence is PTVRHRDLTRQKSNAEESTVPGVGS. Over residues 292 to 303 the composition is skewed to basic and acidic residues; sequence RHRDLTRQKSNA.

It belongs to the RapZ-like family.

Its function is as follows. Displays ATPase and GTPase activities. This Rhizorhabdus wittichii (strain DSM 6014 / CCUG 31198 / JCM 15750 / NBRC 105917 / EY 4224 / RW1) (Sphingomonas wittichii) protein is Nucleotide-binding protein Swit_0399.